Reading from the N-terminus, the 206-residue chain is Delta and osm-11 homolog protein 1 (206 aa).

In Caenorhabditis elegans, this protein is Delta and osm-11 homolog protein 1 (dos-1).